Consider the following 329-residue polypeptide: Secretory carrier-associated membrane protein 2 (329 aa).

Disordered regions lie at residues 1 to 21 (MSAFDTNPFADPVDVNPFQDP) and 51 to 72 (VTQLPGSSQPAVLQPSVEPTQP). The Cytoplasmic portion of the chain corresponds to 1–153 (MSAFDTNPFA…DYQRICKMLY (153 aa)). Residues 154–174 (YLWMLHSVTLFLNLLACLAWF) traverse the membrane as a helical segment. Residues 175–181 (SGNSSKG) lie on the Lumenal side of the membrane. A helical membrane pass occupies residues 182–202 (VDFGLSILWFLIFTPCAFLCW). Residues 203-218 (YRPIYKAFRSDNSFSF) lie on the Cytoplasmic side of the membrane. The interaction with SLC9A7 stretch occupies residues 203–218 (YRPIYKAFRSDNSFSF). Residues 219 to 239 (FVFFFVFFCQIGIYIIQLVGI) traverse the membrane as a helical segment. The Lumenal segment spans residues 240 to 262 (PGLGDSGWIAALSTLDNHSLAIS). The helical transmembrane segment at 263–283 (VIMMVVAGFFTLCAVLSVFLL) threads the bilayer. Topologically, residues 284–329 (QRVHSLYRRTGASFQQAQEEFSQGIFSSRTFHRAASSAAQGAFQGN) are cytoplasmic. Phosphoserine occurs at positions 319 and 320.

The protein belongs to the SCAMP family. Interacts with SLC6A4 and SLC9A7. Interacts with SLC9A5; this interaction regulates SLC9A5 cell-surface targeting and SLC9A5 activity. Widely expressed.

Its subcellular location is the golgi apparatus. It is found in the trans-Golgi network membrane. The protein resides in the recycling endosome membrane. Functionally, functions in post-Golgi recycling pathways. Acts as a recycling carrier to the cell surface. This Homo sapiens (Human) protein is Secretory carrier-associated membrane protein 2 (SCAMP2).